Reading from the N-terminus, the 381-residue chain is Succinyl-diaminopimelate desuccinylase (381 aa).

Residue His68 coordinates Zn(2+). Asp70 is a catalytic residue. A Zn(2+)-binding site is contributed by Asp101. Glu135 (proton acceptor) is an active-site residue. Zn(2+)-binding residues include Glu136, Glu164, and His350.

Belongs to the peptidase M20A family. DapE subfamily. In terms of assembly, homodimer. Zn(2+) serves as cofactor. The cofactor is Co(2+).

The enzyme catalyses N-succinyl-(2S,6S)-2,6-diaminopimelate + H2O = (2S,6S)-2,6-diaminopimelate + succinate. Its pathway is amino-acid biosynthesis; L-lysine biosynthesis via DAP pathway; LL-2,6-diaminopimelate from (S)-tetrahydrodipicolinate (succinylase route): step 3/3. In terms of biological role, catalyzes the hydrolysis of N-succinyl-L,L-diaminopimelic acid (SDAP), forming succinate and LL-2,6-diaminopimelate (DAP), an intermediate involved in the bacterial biosynthesis of lysine and meso-diaminopimelic acid, an essential component of bacterial cell walls. This is Succinyl-diaminopimelate desuccinylase from Neisseria meningitidis serogroup C (strain 053442).